Reading from the N-terminus, the 89-residue chain is Small ribosomal subunit protein uS15 (89 aa).

The protein belongs to the universal ribosomal protein uS15 family. Part of the 30S ribosomal subunit. Forms a bridge to the 50S subunit in the 70S ribosome, contacting the 23S rRNA.

Its function is as follows. One of the primary rRNA binding proteins, it binds directly to 16S rRNA where it helps nucleate assembly of the platform of the 30S subunit by binding and bridging several RNA helices of the 16S rRNA. Functionally, forms an intersubunit bridge (bridge B4) with the 23S rRNA of the 50S subunit in the ribosome. The chain is Small ribosomal subunit protein uS15 from Cereibacter sphaeroides (strain ATCC 17025 / ATH 2.4.3) (Rhodobacter sphaeroides).